The following is a 95-amino-acid chain: Aspartyl/glutamyl-tRNA(Asn/Gln) amidotransferase subunit C (95 aa).

The protein belongs to the GatC family. In terms of assembly, heterotrimer of A, B and C subunits.

It catalyses the reaction L-glutamyl-tRNA(Gln) + L-glutamine + ATP + H2O = L-glutaminyl-tRNA(Gln) + L-glutamate + ADP + phosphate + H(+). It carries out the reaction L-aspartyl-tRNA(Asn) + L-glutamine + ATP + H2O = L-asparaginyl-tRNA(Asn) + L-glutamate + ADP + phosphate + 2 H(+). Its function is as follows. Allows the formation of correctly charged Asn-tRNA(Asn) or Gln-tRNA(Gln) through the transamidation of misacylated Asp-tRNA(Asn) or Glu-tRNA(Gln) in organisms which lack either or both of asparaginyl-tRNA or glutaminyl-tRNA synthetases. The reaction takes place in the presence of glutamine and ATP through an activated phospho-Asp-tRNA(Asn) or phospho-Glu-tRNA(Gln). The protein is Aspartyl/glutamyl-tRNA(Asn/Gln) amidotransferase subunit C of Methylobacterium sp. (strain 4-46).